We begin with the raw amino-acid sequence, 367 residues long: Putative F-box protein At3g21120 (367 aa).

Positions 1 to 43 constitute an F-box domain; it reads MHLPEDLVLEILSKVPAVSLARFRSTCRRWNALVVDGSFAKKH.

The sequence is that of Putative F-box protein At3g21120 from Arabidopsis thaliana (Mouse-ear cress).